The following is a 550-amino-acid chain: Crystal protein (550 aa).

Residues 1-19 (MNKIIILLIILLSFDIISA) form the signal peptide. An intrachain disulfide couples Cys-91 to Cys-111. Asn-156 carries N-linked (GlcNAc...) asparagine glycosylation. Ser-215 (acyl-ester intermediate) is an active-site residue. The cysteines at positions 267 and 274 are disulfide-linked. Active-site charge relay system residues include Glu-340 and His-443. A glycan (N-linked (GlcNAc...) asparagine) is linked at Asn-506.

The protein belongs to the type-B carboxylesterase/lipase family.

The protein localises to the cytoplasmic vesicle. It is found in the esterosome membrane. The polypeptide is Crystal protein (cryS) (Dictyostelium discoideum (Social amoeba)).